The sequence spans 237 residues: 1-(5-phosphoribosyl)-5-[(5-phosphoribosylamino)methylideneamino] imidazole-4-carboxamide isomerase (237 aa).

D8 (proton acceptor) is an active-site residue. D128 serves as the catalytic Proton donor.

It belongs to the HisA/HisF family.

The protein resides in the cytoplasm. It carries out the reaction 1-(5-phospho-beta-D-ribosyl)-5-[(5-phospho-beta-D-ribosylamino)methylideneamino]imidazole-4-carboxamide = 5-[(5-phospho-1-deoxy-D-ribulos-1-ylimino)methylamino]-1-(5-phospho-beta-D-ribosyl)imidazole-4-carboxamide. The protein operates within amino-acid biosynthesis; L-histidine biosynthesis; L-histidine from 5-phospho-alpha-D-ribose 1-diphosphate: step 4/9. The protein is 1-(5-phosphoribosyl)-5-[(5-phosphoribosylamino)methylideneamino] imidazole-4-carboxamide isomerase of Gemmatimonas aurantiaca (strain DSM 14586 / JCM 11422 / NBRC 100505 / T-27).